Reading from the N-terminus, the 370-residue chain is tRNA-specific 2-thiouridylase MnmA (370 aa).

ATP-binding positions include 20–27 (GMSGGVDS) and methionine 46. The tract at residues 106–108 (NPD) is interaction with target base in tRNA. Cysteine 111 (nucleophile) is an active-site residue. Cysteine 111 and cysteine 207 form a disulfide bridge. Glycine 135 provides a ligand contact to ATP. The interval 157 to 159 (KDQ) is interaction with tRNA. Cysteine 207 (cysteine persulfide intermediate) is an active-site residue. The interval 318–319 (RY) is interaction with tRNA.

Belongs to the MnmA/TRMU family.

It localises to the cytoplasm. The catalysed reaction is S-sulfanyl-L-cysteinyl-[protein] + uridine(34) in tRNA + AH2 + ATP = 2-thiouridine(34) in tRNA + L-cysteinyl-[protein] + A + AMP + diphosphate + H(+). Its function is as follows. Catalyzes the 2-thiolation of uridine at the wobble position (U34) of tRNA, leading to the formation of s(2)U34. The protein is tRNA-specific 2-thiouridylase MnmA of Polynucleobacter asymbioticus (strain DSM 18221 / CIP 109841 / QLW-P1DMWA-1) (Polynucleobacter necessarius subsp. asymbioticus).